The following is a 90-amino-acid chain: Probable oxaloacetate decarboxylase gamma chain 2 (90 aa).

The helical transmembrane segment at 10–32 threads the bilayer; sequence GINLLTLGMGFVFIFLIFLVYAT.

This sequence belongs to the OadG family. In terms of assembly, heterotrimer of an alpha, a beta and a gamma subunit. Requires Na(+) as cofactor.

The protein resides in the cell membrane. The enzyme catalyses oxaloacetate + 2 Na(+)(in) + H(+) = pyruvate + 2 Na(+)(out) + CO2. Its function is as follows. Catalyzes the decarboxylation of oxaloacetate coupled to Na(+) translocation. The sequence is that of Probable oxaloacetate decarboxylase gamma chain 2 (oadG2) from Vibrio cholerae serotype O1 (strain ATCC 39315 / El Tor Inaba N16961).